A 651-amino-acid polypeptide reads, in one-letter code: Maternal embryonic leucine zipper kinase (651 aa).

In terms of domain architecture, Protein kinase spans 11–263 (YELHETIGTG…MKNLLNHPWI (253 aa)). Residues 17–25 (IGTGGFAKV) and lysine 40 each bind ATP. A Phosphothreonine; by autocatalysis modification is found at threonine 56. The Proton acceptor role is filled by aspartate 132. Tyrosine 163 carries the phosphotyrosine; by autocatalysis modification. Residue threonine 167 is modified to Phosphothreonine; by autocatalysis. Phosphoserine; by autocatalysis occurs at positions 171 and 253. Residues 282–321 (LDDDCVTELSVHHRNNRQTMEDLISLWQYDHLTATYLLLL) form a UBA-like region. The tract at residues 326 to 651 (RGKPVRLRLS…VEDILSSCKV (326 aa)) is autoinhibitory region. Serine 336, serine 343, and serine 356 each carry phosphoserine; by autocatalysis. Tyrosine 367 is modified (phosphotyrosine). A Phosphoserine; by autocatalysis modification is found at serine 391. Threonine 398 carries the post-translational modification Phosphothreonine; by autocatalysis. The residue at position 407 (serine 407) is a Phosphoserine; by autocatalysis. At threonine 409 the chain carries Phosphothreonine. Serine 431 carries the post-translational modification Phosphoserine; by autocatalysis. At threonine 478 the chain carries Phosphothreonine. Threonine 494 bears the Phosphothreonine; by autocatalysis mark. At serine 498 the chain carries Phosphoserine. Serine 505 bears the Phosphoserine; by autocatalysis mark. A Phosphothreonine modification is found at threonine 518. Position 529 is a phosphoserine; by autocatalysis (serine 529). Serine 529 is subject to Phosphoserine. At threonine 539 the chain carries Phosphothreonine; by autocatalysis. One can recognise a KA1 domain in the interval 602-651 (SDFGKVTMQFELEVCQLQKPDVVGIRRQRLKGDAWVYKRLVEDILSSCKV).

The protein belongs to the protein kinase superfamily. CAMK Ser/Thr protein kinase family. SNF1 subfamily. Monomer. Interacts with ZNF622 and PPP1R8. Autophosphorylated: autophosphorylation of the T-loop at Thr-167 and Ser-171 is required for activation. Thr-478 phosphorylation during mitosis promotes interaction with PPP1R8. Expressed in placenta, kidney, thymus, testis, ovary and intestine.

The protein localises to the cell membrane. It catalyses the reaction L-tyrosyl-[protein] + ATP = O-phospho-L-tyrosyl-[protein] + ADP + H(+). The enzyme catalyses L-seryl-[protein] + ATP = O-phospho-L-seryl-[protein] + ADP + H(+). It carries out the reaction L-threonyl-[protein] + ATP = O-phospho-L-threonyl-[protein] + ADP + H(+). With respect to regulation, activated by autophosphorylation of the T-loop at Thr-167 and Ser-171: in contrast to other members of the SNF1 subfamily, phosphorylation at Thr-167 is not mediated by STK11/LKB1 but via autophosphorylation instead. Inhibited by calcium-binding. Kinase activity is also regulated by reducing agents: dithiothreitol (DTT) or reduced glutathione are required for kinase activity in vitro; such dependence is however not due to the presence of disulfide bonds. Its function is as follows. Serine/threonine-protein kinase involved in various processes such as cell cycle regulation, self-renewal of stem cells, apoptosis and splicing regulation. Has a broad substrate specificity; phosphorylates BCL2L14, CDC25B, MAP3K5/ASK1 and ZNF622. Acts as an activator of apoptosis by phosphorylating and activating MAP3K5/ASK1. Acts as a regulator of cell cycle, notably by mediating phosphorylation of CDC25B, promoting localization of CDC25B to the centrosome and the spindle poles during mitosis. Plays a key role in cell proliferation and carcinogenesis. Required for proliferation of embryonic and postnatal multipotent neural progenitors. Phosphorylates and inhibits BCL2L14, possibly leading to affect mammary carcinogenesis by mediating inhibition of the pro-apoptotic function of BCL2L14. Also involved in the inhibition of spliceosome assembly during mitosis by phosphorylating ZNF622, thereby contributing to its redirection to the nucleus. May also play a role in primitive hematopoiesis. This chain is Maternal embryonic leucine zipper kinase (MELK), found in Homo sapiens (Human).